The sequence spans 375 residues: Succinyl-diaminopimelate desuccinylase (375 aa).

Histidine 75 is a Zn(2+) binding site. Residue aspartate 77 is part of the active site. Aspartate 106 contacts Zn(2+). Residue glutamate 136 is the Proton acceptor of the active site. Residues glutamate 137, glutamate 165, and histidine 348 each coordinate Zn(2+).

The protein belongs to the peptidase M20A family. DapE subfamily. As to quaternary structure, homodimer. It depends on Zn(2+) as a cofactor. Co(2+) serves as cofactor.

It carries out the reaction N-succinyl-(2S,6S)-2,6-diaminopimelate + H2O = (2S,6S)-2,6-diaminopimelate + succinate. Its pathway is amino-acid biosynthesis; L-lysine biosynthesis via DAP pathway; LL-2,6-diaminopimelate from (S)-tetrahydrodipicolinate (succinylase route): step 3/3. In terms of biological role, catalyzes the hydrolysis of N-succinyl-L,L-diaminopimelic acid (SDAP), forming succinate and LL-2,6-diaminopimelate (DAP), an intermediate involved in the bacterial biosynthesis of lysine and meso-diaminopimelic acid, an essential component of bacterial cell walls. The polypeptide is Succinyl-diaminopimelate desuccinylase (Novosphingobium aromaticivorans (strain ATCC 700278 / DSM 12444 / CCUG 56034 / CIP 105152 / NBRC 16084 / F199)).